The primary structure comprises 492 residues: Aspartyl/glutamyl-tRNA(Asn/Gln) amidotransferase subunit B (492 aa).

This sequence belongs to the GatB/GatE family. GatB subfamily. In terms of assembly, heterotrimer of A, B and C subunits.

The catalysed reaction is L-glutamyl-tRNA(Gln) + L-glutamine + ATP + H2O = L-glutaminyl-tRNA(Gln) + L-glutamate + ADP + phosphate + H(+). The enzyme catalyses L-aspartyl-tRNA(Asn) + L-glutamine + ATP + H2O = L-asparaginyl-tRNA(Asn) + L-glutamate + ADP + phosphate + 2 H(+). Functionally, allows the formation of correctly charged Asn-tRNA(Asn) or Gln-tRNA(Gln) through the transamidation of misacylated Asp-tRNA(Asn) or Glu-tRNA(Gln) in organisms which lack either or both of asparaginyl-tRNA or glutaminyl-tRNA synthetases. The reaction takes place in the presence of glutamine and ATP through an activated phospho-Asp-tRNA(Asn) or phospho-Glu-tRNA(Gln). The protein is Aspartyl/glutamyl-tRNA(Asn/Gln) amidotransferase subunit B of Prochlorococcus marinus (strain SARG / CCMP1375 / SS120).